Reading from the N-terminus, the 185-residue chain is Homeobox-leucine zipper protein ATHB-22 (185 aa).

The segment at residues 76–135 (TSEQLKFLERSFQEEIKLNPDRKMKLNPDRKMKLSKELGLQPRQIAVWFQNRKARWKNKQ) is a DNA-binding region (homeobox). Residues 136-164 (LEHLYESLRQEFDIVSREKELLQEELIQL) are leucine-zipper.

Belongs to the HD-ZIP homeobox family. Class I subfamily. As to expression, expressed in siliques.

The protein resides in the nucleus. In terms of biological role, probable transcription factor. The chain is Homeobox-leucine zipper protein ATHB-22 (ATHB-22) from Arabidopsis thaliana (Mouse-ear cress).